Reading from the N-terminus, the 149-residue chain is Large ribosomal subunit protein uL13 (149 aa).

The protein belongs to the universal ribosomal protein uL13 family. As to quaternary structure, part of the 50S ribosomal subunit.

In terms of biological role, this protein is one of the early assembly proteins of the 50S ribosomal subunit, although it is not seen to bind rRNA by itself. It is important during the early stages of 50S assembly. In Thermosipho africanus (strain TCF52B), this protein is Large ribosomal subunit protein uL13.